A 220-amino-acid chain; its full sequence is Peptide methionine sulfoxide reductase MsrA (220 aa).

The active site involves C54.

Belongs to the MsrA Met sulfoxide reductase family.

The catalysed reaction is L-methionyl-[protein] + [thioredoxin]-disulfide + H2O = L-methionyl-(S)-S-oxide-[protein] + [thioredoxin]-dithiol. It catalyses the reaction [thioredoxin]-disulfide + L-methionine + H2O = L-methionine (S)-S-oxide + [thioredoxin]-dithiol. Has an important function as a repair enzyme for proteins that have been inactivated by oxidation. Catalyzes the reversible oxidation-reduction of methionine sulfoxide in proteins to methionine. In Salinispora arenicola (strain CNS-205), this protein is Peptide methionine sulfoxide reductase MsrA.